The chain runs to 284 residues: Phosphate import ATP-binding protein PstB 2 (284 aa).

Positions 1–22 are enriched in polar residues; it reads MTLLSTLRGISSPARQQPGTQS. Positions 1 to 29 are disordered; sequence MTLLSTLRGISSPARQQPGTQSESRRGGD. The ABC transporter domain maps to 36–278; sequence LAVAGVSHGF…PDDARARKFI (243 aa). 68–75 contributes to the ATP binding site; that stretch reads GPSGTGKT.

It belongs to the ABC transporter superfamily. Phosphate importer (TC 3.A.1.7) family. In terms of assembly, the complex is composed of two ATP-binding proteins (PstB), two transmembrane proteins (PstC and PstA) and a solute-binding protein (PstS).

The protein localises to the cell membrane. It carries out the reaction phosphate(out) + ATP + H2O = ADP + 2 phosphate(in) + H(+). Functionally, part of the ABC transporter complex PstSACB involved in phosphate import. Responsible for energy coupling to the transport system. In Natronomonas pharaonis (strain ATCC 35678 / DSM 2160 / CIP 103997 / JCM 8858 / NBRC 14720 / NCIMB 2260 / Gabara) (Halobacterium pharaonis), this protein is Phosphate import ATP-binding protein PstB 2.